The primary structure comprises 112 residues: Small ribosomal subunit protein bS6 (112 aa).

Belongs to the bacterial ribosomal protein bS6 family.

Binds together with bS18 to 16S ribosomal RNA. This is Small ribosomal subunit protein bS6 from Chlamydia abortus (strain DSM 27085 / S26/3) (Chlamydophila abortus).